Consider the following 297-residue polypeptide: Bifunctional protein FolD (297 aa).

Residues 167–169 (GRS), serine 192, and isoleucine 233 contribute to the NADP(+) site.

Belongs to the tetrahydrofolate dehydrogenase/cyclohydrolase family. Homodimer.

The catalysed reaction is (6R)-5,10-methylene-5,6,7,8-tetrahydrofolate + NADP(+) = (6R)-5,10-methenyltetrahydrofolate + NADPH. It catalyses the reaction (6R)-5,10-methenyltetrahydrofolate + H2O = (6R)-10-formyltetrahydrofolate + H(+). The protein operates within one-carbon metabolism; tetrahydrofolate interconversion. Functionally, catalyzes the oxidation of 5,10-methylenetetrahydrofolate to 5,10-methenyltetrahydrofolate and then the hydrolysis of 5,10-methenyltetrahydrofolate to 10-formyltetrahydrofolate. The sequence is that of Bifunctional protein FolD from Caulobacter vibrioides (strain ATCC 19089 / CIP 103742 / CB 15) (Caulobacter crescentus).